The chain runs to 231 residues: 2-phospho-L-lactate guanylyltransferase (231 aa).

This sequence belongs to the CofC family. In terms of assembly, homodimer.

It carries out the reaction (2S)-2-phospholactate + GTP + H(+) = (2S)-lactyl-2-diphospho-5'-guanosine + diphosphate. It functions in the pathway cofactor biosynthesis; coenzyme F420 biosynthesis. Its function is as follows. Guanylyltransferase that catalyzes the activation of (2S)-2-phospholactate (2-PL) as (2S)-lactyl-2-diphospho-5'-guanosine, via the condensation of 2-PL with GTP. It is involved in the biosynthesis of coenzyme F420, a hydride carrier cofactor. The sequence is that of 2-phospho-L-lactate guanylyltransferase from Haloterrigena turkmenica (strain ATCC 51198 / DSM 5511 / JCM 9101 / NCIMB 13204 / VKM B-1734 / 4k) (Halococcus turkmenicus).